A 272-amino-acid polypeptide reads, in one-letter code: uncharacterized protein (272 aa).

The AB hydrolase-1 domain maps to 20–133 (PVLIFIPGAN…PPINTFLPDS (114 aa)).

Belongs to the AB hydrolase superfamily.

This is an uncharacterized protein from Staphylococcus aureus (strain MSSA476).